Here is an 83-residue protein sequence, read N- to C-terminus: Small ribosomal subunit protein uS17 (83 aa).

It belongs to the universal ribosomal protein uS17 family. Part of the 30S ribosomal subunit.

Functionally, one of the primary rRNA binding proteins, it binds specifically to the 5'-end of 16S ribosomal RNA. This chain is Small ribosomal subunit protein uS17, found in Ehrlichia chaffeensis (strain ATCC CRL-10679 / Arkansas).